A 745-amino-acid polypeptide reads, in one-letter code: Chitin synthase D (745 aa).

The next 5 membrane-spanning stretches (helical) occupy residues 26–46, 55–75, 412–432, 434–454, and 464–484; these read LAHR…PVHL, VLML…IPWL, TTAL…SSIN, LPVG…FYLG, and LFPL…VYGI. 2 disordered regions span residues 613-635 and 672-745; these read TGDN…SLHQ and ILPH…ESMV. Residues 707 to 720 are compositionally biased toward polar residues; it reads NASTRGSMEGNTPE.

It belongs to the chitin synthase family. Class VI subfamily.

The protein resides in the cell membrane. It catalyses the reaction [(1-&gt;4)-N-acetyl-beta-D-glucosaminyl](n) + UDP-N-acetyl-alpha-D-glucosamine = [(1-&gt;4)-N-acetyl-beta-D-glucosaminyl](n+1) + UDP + H(+). Its function is as follows. Polymerizes chitin, a structural polymer of the cell wall and septum, by transferring the sugar moiety of UDP-GlcNAc to the non-reducing end of the growing chitin polymer. The protein is Chitin synthase D (chsD) of Aspergillus fumigatus (strain ATCC MYA-4609 / CBS 101355 / FGSC A1100 / Af293) (Neosartorya fumigata).